Here is a 530-residue protein sequence, read N- to C-terminus: Rho GTPase-activating protein 36 (530 aa).

A signal peptide spans 1-19 (MPPLLLLSALIFLVNVLGG). A Rho-GAP domain is found at 209 to 409 (MSLNPIAKQI…AMIDNWDVLF (201 aa)). Positions 471-512 (GQSKPFDEGSSEEPAVPPGTARSHDDEEGAGNPLILEQDRPL) are disordered.

May interacts (via the Rho-GAP domain) with the active form of RAC1.

Functionally, GTPase activator for the Rho-type GTPases by converting them to an inactive GDP-bound state. The polypeptide is Rho GTPase-activating protein 36 (ARHGAP36) (Bos taurus (Bovine)).